The chain runs to 880 residues: Phosphoinositide 3-kinase regulatory subunit 5 (880 aa).

Met1 bears the N-acetylmethionine mark. A heterodimerization region spans residues 25 to 101 (SLSRRSTSWS…TPHFPPDSDL (77 aa)). 4 disordered regions span residues 315–339 (GILGDDEEEEEEEEEVEEDLETDGH), 389–416 (SGYVEDSEESSSEWPWRRGSQERRGHRR), 454–510 (RRAG…SGDE), and 565–601 (HGTSPGACPPPRSQTPSPPTDSPRHASPGELGTTPWE). The span at 318 to 335 (GDDEEEEEEEEEVEEDLE) shows a compositional bias: acidic residues. A phosphoserine mark is found at Ser458 and Ser507. Residues 571–585 (ACPPPRSQTPSPPTD) are compositionally biased toward pro residues. The segment at 653-753 (PILADMLLYY…WSNLEKVCTS (101 aa)) is interaction with beta-gamma G protein dimers.

As to quaternary structure, heterodimer of a catalytic subunit (PIK3CG/p120) and a regulatory (PIK3R5a/p101) subunit. Interacts with beta-gamma G protein dimers. Ubiquitously expressed with high expression in fetal brain compared to adult brain. Abundant expression is observed in cerebellum, cerebral cortex, cerebral meninges, and vermis cerebelli.

It localises to the nucleus. The protein resides in the cytoplasm. It is found in the cell membrane. Its activity is regulated as follows. Greatly activated by G gamma proteins. In terms of biological role, regulatory subunit of the PI3K gamma complex. Required for recruitment of the catalytic subunit to the plasma membrane via interaction with beta-gamma G protein dimers. Required for G protein-mediated activation of PIK3CG. This is Phosphoinositide 3-kinase regulatory subunit 5 (PIK3R5) from Homo sapiens (Human).